The sequence spans 212 residues: Ribonuclease HII (212 aa).

One can recognise an RNase H type-2 domain in the interval 20 to 209 (TCVVGVDEVG…VHNILYQEAS (190 aa)). A divalent metal cation is bound by residues Asp26, Glu27, and Asp117.

Belongs to the RNase HII family. It depends on Mn(2+) as a cofactor. The cofactor is Mg(2+).

The protein localises to the cytoplasm. The enzyme catalyses Endonucleolytic cleavage to 5'-phosphomonoester.. Functionally, endonuclease that specifically degrades the RNA of RNA-DNA hybrids. This Cereibacter sphaeroides (strain ATCC 17029 / ATH 2.4.9) (Rhodobacter sphaeroides) protein is Ribonuclease HII.